The sequence spans 60 residues: Large ribosomal subunit protein bL33 (60 aa).

This sequence belongs to the bacterial ribosomal protein bL33 family.

This chain is Large ribosomal subunit protein bL33, found in Chlorobium chlorochromatii (strain CaD3).